The primary structure comprises 529 residues: Chromosomal replication initiator protein DnaA (529 aa).

Residues 1–72 (MQDFWHAASA…SLACDYWEAT (72 aa)) are domain I, interacts with DnaA modulators. A domain II region spans residues 72-192 (TVDVQFVLDP…HVDDSVHERS (121 aa)). The interval 193 to 409 (RLNQILTFDN…GALRKILAYS (217 aa)) is domain III, AAA+ region. Residues G237, G239, K240, and T241 each contribute to the ATP site. Positions 410 to 529 (NFHGKEITIE…LHVLEQTLKG (120 aa)) are domain IV, binds dsDNA.

It belongs to the DnaA family. Oligomerizes as a right-handed, spiral filament on DNA at oriC.

The protein localises to the cytoplasm. Functionally, plays an essential role in the initiation and regulation of chromosomal replication. ATP-DnaA binds to the origin of replication (oriC) to initiate formation of the DNA replication initiation complex once per cell cycle. Binds the DnaA box (a 9 base pair repeat at the origin) and separates the double-stranded (ds)DNA. Forms a right-handed helical filament on oriC DNA; dsDNA binds to the exterior of the filament while single-stranded (ss)DNA is stabiized in the filament's interior. The ATP-DnaA-oriC complex binds and stabilizes one strand of the AT-rich DNA unwinding element (DUE), permitting loading of DNA polymerase. After initiation quickly degrades to an ADP-DnaA complex that is not apt for DNA replication. Binds acidic phospholipids. The polypeptide is Chromosomal replication initiator protein DnaA (Ralstonia pickettii (strain 12J)).